Consider the following 179-residue polypeptide: Low molecular weight phosphotyrosine protein phosphatase (179 aa).

The active-site Nucleophile is C15. Residue R21 is part of the active site. D148 functions as the Proton donor in the catalytic mechanism.

It belongs to the low molecular weight phosphotyrosine protein phosphatase family.

The protein localises to the cytoplasm. It carries out the reaction O-phospho-L-tyrosyl-[protein] + H2O = L-tyrosyl-[protein] + phosphate. The enzyme catalyses a phosphate monoester + H2O = an alcohol + phosphate. Acts on tyrosine phosphorylated proteins, low-MW aryl phosphates and natural and synthetic acyl phosphates. This chain is Low molecular weight phosphotyrosine protein phosphatase (acp1), found in Dictyostelium discoideum (Social amoeba).